We begin with the raw amino-acid sequence, 119 residues long: Large ribosomal subunit protein uL22 (119 aa).

This sequence belongs to the universal ribosomal protein uL22 family. As to quaternary structure, part of the 50S ribosomal subunit.

Functionally, this protein binds specifically to 23S rRNA; its binding is stimulated by other ribosomal proteins, e.g. L4, L17, and L20. It is important during the early stages of 50S assembly. It makes multiple contacts with different domains of the 23S rRNA in the assembled 50S subunit and ribosome. Its function is as follows. The globular domain of the protein is located near the polypeptide exit tunnel on the outside of the subunit, while an extended beta-hairpin is found that lines the wall of the exit tunnel in the center of the 70S ribosome. In Trichodesmium erythraeum (strain IMS101), this protein is Large ribosomal subunit protein uL22.